Reading from the N-terminus, the 420-residue chain is 3-phosphoshikimate 1-carboxyvinyltransferase (420 aa).

3-phosphoshikimate contacts are provided by K20, S21, and R25. K20 provides a ligand contact to phosphoenolpyruvate. R119 is a phosphoenolpyruvate binding site. The 3-phosphoshikimate site is built by S161, S162, Q163, S189, D303, Q326, and K330. Q163 contributes to the phosphoenolpyruvate binding site. Residue D303 is the Proton acceptor of the active site. R334, R375, and K400 together coordinate phosphoenolpyruvate.

The protein belongs to the EPSP synthase family. As to quaternary structure, monomer.

The protein localises to the cytoplasm. It catalyses the reaction 3-phosphoshikimate + phosphoenolpyruvate = 5-O-(1-carboxyvinyl)-3-phosphoshikimate + phosphate. It functions in the pathway metabolic intermediate biosynthesis; chorismate biosynthesis; chorismate from D-erythrose 4-phosphate and phosphoenolpyruvate: step 6/7. Functionally, catalyzes the transfer of the enolpyruvyl moiety of phosphoenolpyruvate (PEP) to the 5-hydroxyl of shikimate-3-phosphate (S3P) to produce enolpyruvyl shikimate-3-phosphate and inorganic phosphate. The polypeptide is 3-phosphoshikimate 1-carboxyvinyltransferase (Dehalococcoides mccartyi (strain ATCC BAA-2100 / JCM 16839 / KCTC 5957 / BAV1)).